Reading from the N-terminus, the 160-residue chain is Ubiquitin-like protein ATG12 (160 aa).

The segment at Met1–Pro40 is disordered. Residue Gly160 forms a Glycyl lysine isopeptide (Gly-Lys) (interchain with K-102 in ATG5) linkage.

It belongs to the ATG12 family. Forms a conjugate with ATG5. Forms a thioester bond with the 'Cys-196' of ATG10. Interacts with the ATG7 C-terminal 40 amino acids domain. The ATG12-ATG5 conjugate forms a complex with several units of ATG16. The ATG12-ATG5 conjugate also associates with ATG3.

Its subcellular location is the preautophagosomal structure membrane. Ubiquitin-like protein involved in cytoplasm to vacuole transport (Cvt), autophagy vesicles formation, mitophagy, and nucleophagy. Conjugation with ATG5 through a ubiquitin-like conjugating system involving also ATG7 as an E1-like activating enzyme and ATG10 as an E2-like conjugating enzyme, is essential for its function. The ATG12-ATG5 conjugate acts as an E3-like enzyme which is required for lipidation of ATG8 and ATG8 association to the vesicle membranes. ATG12-ATG5 rearranges the ATG3 catalytic center and enhances its E2 activity. Autophagy is required for proper vegetative growth, asexual/sexual reproduction, and full virulence. Autophagy is particularly involved in the biosynthesis of deoxynivalenol (DON), an important virulence determinant. In Gibberella zeae (strain ATCC MYA-4620 / CBS 123657 / FGSC 9075 / NRRL 31084 / PH-1) (Wheat head blight fungus), this protein is Ubiquitin-like protein ATG12.